Consider the following 278-residue polypeptide: Formamidopyrimidine-DNA glycosylase (278 aa).

Proline 2 (schiff-base intermediate with DNA) is an active-site residue. Glutamate 3 functions as the Proton donor in the catalytic mechanism. Catalysis depends on lysine 57, which acts as the Proton donor; for beta-elimination activity. DNA is bound by residues histidine 90, arginine 109, and lysine 150. The FPG-type zinc finger occupies 235–269; it reads QVYGRAGEPCRQCGHPIEIAKHGQRSTFFCRHCQF. Arginine 259 functions as the Proton donor; for delta-elimination activity in the catalytic mechanism.

Belongs to the FPG family. Monomer. Requires Zn(2+) as cofactor.

It carries out the reaction Hydrolysis of DNA containing ring-opened 7-methylguanine residues, releasing 2,6-diamino-4-hydroxy-5-(N-methyl)formamidopyrimidine.. The enzyme catalyses 2'-deoxyribonucleotide-(2'-deoxyribose 5'-phosphate)-2'-deoxyribonucleotide-DNA = a 3'-end 2'-deoxyribonucleotide-(2,3-dehydro-2,3-deoxyribose 5'-phosphate)-DNA + a 5'-end 5'-phospho-2'-deoxyribonucleoside-DNA + H(+). Functionally, involved in base excision repair of DNA damaged by oxidation or by mutagenic agents. Acts as a DNA glycosylase that recognizes and removes damaged bases. Has a preference for oxidized purines, such as 7,8-dihydro-8-oxoguanine (8-oxoG). Has AP (apurinic/apyrimidinic) lyase activity and introduces nicks in the DNA strand. Cleaves the DNA backbone by beta-delta elimination to generate a single-strand break at the site of the removed base with both 3'- and 5'-phosphates. In Yersinia pestis (strain Pestoides F), this protein is Formamidopyrimidine-DNA glycosylase.